The following is a 360-amino-acid chain: Phospho-N-acetylmuramoyl-pentapeptide-transferase (360 aa).

The next 10 membrane-spanning stretches (helical) occupy residues 21-41 (YLTL…FIVG), 70-90 (GTPT…TLLW), 97-117 (YVWA…VDDY), 134-154 (YLWQ…TASS), 168-188 (VVLN…VGSS), 199-219 (GLAI…AYAS), 236-256 (AGEL…FLWF), 263-283 (VFMG…VAVL), 288-308 (IVLM…MLQV), and 338-358 (VIVR…ATLK).

Belongs to the glycosyltransferase 4 family. MraY subfamily. It depends on Mg(2+) as a cofactor.

It localises to the cell inner membrane. The catalysed reaction is UDP-N-acetyl-alpha-D-muramoyl-L-alanyl-gamma-D-glutamyl-meso-2,6-diaminopimeloyl-D-alanyl-D-alanine + di-trans,octa-cis-undecaprenyl phosphate = di-trans,octa-cis-undecaprenyl diphospho-N-acetyl-alpha-D-muramoyl-L-alanyl-D-glutamyl-meso-2,6-diaminopimeloyl-D-alanyl-D-alanine + UMP. The protein operates within cell wall biogenesis; peptidoglycan biosynthesis. Catalyzes the initial step of the lipid cycle reactions in the biosynthesis of the cell wall peptidoglycan: transfers peptidoglycan precursor phospho-MurNAc-pentapeptide from UDP-MurNAc-pentapeptide onto the lipid carrier undecaprenyl phosphate, yielding undecaprenyl-pyrophosphoryl-MurNAc-pentapeptide, known as lipid I. This is Phospho-N-acetylmuramoyl-pentapeptide-transferase from Methylococcus capsulatus (strain ATCC 33009 / NCIMB 11132 / Bath).